The primary structure comprises 49 residues: Beta-toxin Rc1 (49 aa).

Intrachain disulfides connect Cys15/Cys31, Cys22/Cys40, and Cys26/Cys42.

Belongs to the long (4 C-C) scorpion toxin superfamily. Sodium channel inhibitor family. Beta subfamily. In terms of tissue distribution, expressed by the venom gland.

It localises to the secreted. Its function is as follows. Beta toxins bind voltage-independently at site-4 of sodium channels (Nav) and shift the voltage of activation toward more negative potentials thereby affecting sodium channel activation and promoting spontaneous and repetitive firing. This toxin acts on X.laevis Nav1.6/SCN8A and insect BgNav1 channels, and also displays a small but significant effect on X.laevis Nav1.4/SCN4A channels. In mice induces nociception (licking and lifting behaviors) during the first 15 minutes after injection, and increases the release of TNF-alpha in J774.1 cells. The polypeptide is Beta-toxin Rc1 (Rhopalurus crassicauda (Scorpion)).